Reading from the N-terminus, the 348-residue chain is SUMO-activating enzyme subunit 1 (348 aa).

The protein belongs to the ubiquitin-activating E1 family. In terms of assembly, heterodimer of sae1 and uba2/sae2. The heterodimer corresponds to the two domains that are encoded on a single polypeptide chain in ubiquitin-activating enzyme E1. Interacts with ube2i.

The protein localises to the nucleus. The protein operates within protein modification; protein sumoylation. Functionally, the heterodimer acts as an E1 ligase for sumo1, sumo2, and sumo3. It mediates ATP-dependent activation of sumo proteins followed by formation of a thioester bond between a sumo protein and a conserved active site cysteine residue on uba2/sae2. The chain is SUMO-activating enzyme subunit 1 (sae1) from Danio rerio (Zebrafish).